The primary structure comprises 142 residues: Peptide methionine sulfoxide reductase MsrB (142 aa).

Positions 2 to 125 (IKKNKNDLNE…NSAAVQFIPY (124 aa)) constitute a MsrB domain. The active-site Nucleophile is the Cys-114.

This sequence belongs to the MsrB Met sulfoxide reductase family.

The enzyme catalyses L-methionyl-[protein] + [thioredoxin]-disulfide + H2O = L-methionyl-(R)-S-oxide-[protein] + [thioredoxin]-dithiol. This is Peptide methionine sulfoxide reductase MsrB from Staphylococcus saprophyticus subsp. saprophyticus (strain ATCC 15305 / DSM 20229 / NCIMB 8711 / NCTC 7292 / S-41).